Consider the following 385-residue polypeptide: Glucans biosynthesis protein C (385 aa).

10 helical membrane passes run A17–W37, M60–L80, V91–Q111, I137–F157, K173–I193, F212–I232, L239–L259, T274–G294, A311–T331, and W338–I358.

The protein belongs to the acyltransferase 3 family. OpgC subfamily.

The protein localises to the cell membrane. It participates in glycan metabolism; osmoregulated periplasmic glucan (OPG) biosynthesis. Its function is as follows. Necessary for the succinyl substitution of periplasmic glucans. Could catalyze the transfer of succinyl residues from the cytoplasmic side of the membrane to the nascent glucan backbones on the periplasmic side of the membrane. This Escherichia coli O17:K52:H18 (strain UMN026 / ExPEC) protein is Glucans biosynthesis protein C.